Reading from the N-terminus, the 468-residue chain is ATP-dependent protease ATPase subunit HslU (468 aa).

Residues valine 22 and 64 to 69 (GVGKTE) each bind ATP. The interval 166–187 (FGNNDEEDEEPPTEDIKTKRSE) is disordered. Positions 169 to 178 (NDEEDEEPPT) are enriched in acidic residues. The ATP site is built by aspartate 281, glutamate 346, and arginine 418.

It belongs to the ClpX chaperone family. HslU subfamily. As to quaternary structure, a double ring-shaped homohexamer of HslV is capped on each side by a ring-shaped HslU homohexamer. The assembly of the HslU/HslV complex is dependent on binding of ATP.

It is found in the cytoplasm. ATPase subunit of a proteasome-like degradation complex; this subunit has chaperone activity. The binding of ATP and its subsequent hydrolysis by HslU are essential for unfolding of protein substrates subsequently hydrolyzed by HslV. HslU recognizes the N-terminal part of its protein substrates and unfolds these before they are guided to HslV for hydrolysis. This chain is ATP-dependent protease ATPase subunit HslU, found in Staphylococcus carnosus (strain TM300).